A 379-amino-acid polypeptide reads, in one-letter code: Putative 2-hydroxyacid dehydrogenase YGL185C (379 aa).

NAD(+)-binding positions include Ser-207 to Ile-208, Leu-291 to Arg-293, and Asp-317. Residue Arg-293 is part of the active site. Glu-322 is an active-site residue. The Proton donor role is filled by His-341. Position 341–344 (His-341–Ser-344) interacts with NAD(+).

The protein belongs to the D-isomer specific 2-hydroxyacid dehydrogenase family.

The polypeptide is Putative 2-hydroxyacid dehydrogenase YGL185C (Saccharomyces cerevisiae (strain ATCC 204508 / S288c) (Baker's yeast)).